Here is a 164-residue protein sequence, read N- to C-terminus: E3 ubiquitin ligase complex SCF subunit sconC (164 aa).

The interval 106–164 (ILAANYLDIKALLDVGCKTVANMIKGKSPEEIRKTFNIQNDFTPEEEDQIRRENEWAEE) is interaction with the F-box domain of F-box proteins.

This sequence belongs to the SKP1 family. As to quaternary structure, component of the SCF (SKP1-CUL1-F-box protein) E3 ubiquitin ligase complexes.

The protein operates within protein modification; protein ubiquitination. Functionally, essential component of the SCF (SKP1-CUL1-F-box protein) E3 ubiquitin ligase complexes, which mediate the ubiquitination and subsequent proteasomal degradation of target proteins. Controls sulfur metabolite repression, probably by mediating the inactivation or degradation of the metR transcription factor. This is E3 ubiquitin ligase complex SCF subunit sconC (sconC) from Arthroderma benhamiae (strain ATCC MYA-4681 / CBS 112371) (Trichophyton mentagrophytes).